The following is a 358-amino-acid chain: Alanine racemase (358 aa).

Residue Lys35 is the Proton acceptor; specific for D-alanine of the active site. Lys35 is subject to N6-(pyridoxal phosphate)lysine. Residue Arg130 participates in substrate binding. Residue Tyr255 is the Proton acceptor; specific for L-alanine of the active site. Met303 is a binding site for substrate.

This sequence belongs to the alanine racemase family. Requires pyridoxal 5'-phosphate as cofactor.

The enzyme catalyses L-alanine = D-alanine. Its pathway is amino-acid biosynthesis; D-alanine biosynthesis; D-alanine from L-alanine: step 1/1. In terms of biological role, catalyzes the interconversion of L-alanine and D-alanine. May also act on other amino acids. The protein is Alanine racemase (alr) of Shewanella sp. (strain MR-7).